The primary structure comprises 453 residues: MELFPEKRILTVSQLTSLIRGVLEENFEHVWVEGEVSNLAMPASGHLYFTLKDAGAQIRCVMFRASARALKFRPRDGMGLIVRGRITVYEQRGDYQFLVEYLEPRGVGALQLAFIQLKEKLAKEGLFAEEHKRPIPSLPQRIGVVTSATGAAIHDILNVLNRRFANVEVLIRPVKVQGEGAADEIAEAIIDFNRYGAVDVMIVGRGGGSLEDLWAFNEEKVARAVHRSRIPIISAVGHEIDFTIADFVADLRAPTPSAAAELVVKSKEELASKVEFLRHRLIQTLRRILADAGGELESLSRALRDPTVLLGHLSQRLDDIFVRLERAIAGDLKDRGRMLEALKNHLRLRNPALKVERARERVIALSDKSEIALLRHVDRYREAAAVHSARLETLSPLGTLARGYSVALKLPERVPVKTFRQLALKDRLELLFHHGRAWCRVESLDEDASCSHE.

Belongs to the XseA family. Heterooligomer composed of large and small subunits.

It localises to the cytoplasm. The enzyme catalyses Exonucleolytic cleavage in either 5'- to 3'- or 3'- to 5'-direction to yield nucleoside 5'-phosphates.. In terms of biological role, bidirectionally degrades single-stranded DNA into large acid-insoluble oligonucleotides, which are then degraded further into small acid-soluble oligonucleotides. The sequence is that of Exodeoxyribonuclease 7 large subunit from Geobacter metallireducens (strain ATCC 53774 / DSM 7210 / GS-15).